The primary structure comprises 975 residues: Translation initiation factor IF-2 (975 aa).

The span at 48–63 (DHLRKSHGATDGDKRK) shows a compositional bias: basic and acidic residues. Disordered regions lie at residues 48–84 (DHLR…GKAR) and 98–388 (KRDD…QAPT). Over residues 104–115 (ETGADQAQAQTD) the composition is skewed to low complexity. Positions 120-177 (AELKRREEEARREAELLEKQAQELRERQERLEREEAERRAREEAAEAERRRAEEEAAA) are enriched in basic and acidic residues. The segment covering 178–211 (KRAAAAQAEAAQQAAAAREQAQRAQSEPAEQSAQ) has biased composition (low complexity). Over residues 212-263 (DEARAAAERAAQREAAKKAEDAAREAADKARAEQEEIRKRREAAEAEARAIR) the composition is skewed to basic and acidic residues. The segment covering 302-330 (KPAGEAAAARPAAKKPASGAPAPAAAPAG) has biased composition (low complexity). Residues 359–372 (SSGGVDRGWRGGPK) show a composition bias toward gly residues. In terms of domain architecture, tr-type G spans 475-644 (PRPPVVTVMG…LLQAEVLELK (170 aa)). The segment at 484-491 (GHVDHGKT) is G1. 484 to 491 (GHVDHGKT) contacts GTP. Positions 509-513 (GITQH) are G2. The tract at residues 530-533 (DTPG) is G3. Residues 530–534 (DTPGH) and 584–587 (NKID) contribute to the GTP site. The tract at residues 584 to 587 (NKID) is G4. The interval 620-622 (SAK) is G5.

Belongs to the TRAFAC class translation factor GTPase superfamily. Classic translation factor GTPase family. IF-2 subfamily.

The protein resides in the cytoplasm. One of the essential components for the initiation of protein synthesis. Protects formylmethionyl-tRNA from spontaneous hydrolysis and promotes its binding to the 30S ribosomal subunits. Also involved in the hydrolysis of GTP during the formation of the 70S ribosomal complex. The polypeptide is Translation initiation factor IF-2 (Burkholderia mallei (strain NCTC 10247)).